Reading from the N-terminus, the 484-residue chain is Chromosomal replication initiator protein DnaA (484 aa).

Residues 1-73 are domain I, interacts with DnaA modulators; that stretch reads MQEGKNIWSL…EILIEKGHST (73 aa). The tract at residues 73–140 is domain II; the sequence is TINVEFIHSQ…EEIHIKYRNP (68 aa). Residues 141 to 357 are domain III, AAA+ region; that stretch reads FLKKKYTFEN…AAVTKLKAHI (217 aa). ATP-binding residues include Gly185, Gly187, Lys188, and Thr189. The tract at residues 358–484 is domain IV, binds dsDNA; that stretch reads DLEDIEIDTN…IELMNKINKN (127 aa).

The protein belongs to the DnaA family. In terms of assembly, oligomerizes as a right-handed, spiral filament on DNA at oriC.

It localises to the cytoplasm. Functionally, plays an essential role in the initiation and regulation of chromosomal replication. ATP-DnaA binds to the origin of replication (oriC) to initiate formation of the DNA replication initiation complex once per cell cycle. Binds the DnaA box (a 9 base pair repeat at the origin) and separates the double-stranded (ds)DNA. Forms a right-handed helical filament on oriC DNA; dsDNA binds to the exterior of the filament while single-stranded (ss)DNA is stabiized in the filament's interior. The ATP-DnaA-oriC complex binds and stabilizes one strand of the AT-rich DNA unwinding element (DUE), permitting loading of DNA polymerase. After initiation quickly degrades to an ADP-DnaA complex that is not apt for DNA replication. Binds acidic phospholipids. This chain is Chromosomal replication initiator protein DnaA, found in Borrelia recurrentis (strain A1).